The sequence spans 245 residues: tRNA pseudouridine synthase A (245 aa).

The active-site Nucleophile is the Asp-52. Position 110 (Tyr-110) interacts with substrate.

It belongs to the tRNA pseudouridine synthase TruA family. In terms of assembly, homodimer.

The catalysed reaction is uridine(38/39/40) in tRNA = pseudouridine(38/39/40) in tRNA. In terms of biological role, formation of pseudouridine at positions 38, 39 and 40 in the anticodon stem and loop of transfer RNAs. This is tRNA pseudouridine synthase A from Borrelia turicatae (strain 91E135).